Consider the following 248-residue polypeptide: Indole-3-glycerol phosphate synthase (248 aa).

Belongs to the TrpC family.

It carries out the reaction 1-(2-carboxyphenylamino)-1-deoxy-D-ribulose 5-phosphate + H(+) = (1S,2R)-1-C-(indol-3-yl)glycerol 3-phosphate + CO2 + H2O. Its pathway is amino-acid biosynthesis; L-tryptophan biosynthesis; L-tryptophan from chorismate: step 4/5. This chain is Indole-3-glycerol phosphate synthase, found in Sulfolobus acidocaldarius (strain ATCC 33909 / DSM 639 / JCM 8929 / NBRC 15157 / NCIMB 11770).